Consider the following 183-residue polypeptide: Transmembrane protein 154 (183 aa).

The signal sequence occupies residues 1–22; that stretch reads MQAPRAALVFALVIALVPVGRG. The Extracellular portion of the chain corresponds to 23 to 75; sequence NYEELENSGDTTVESERPNKVTIPSTFAAVTIKETLNANINSTNFAPDENQLE. Residues 76-96 form a helical membrane-spanning segment; that stretch reads FILMVLIPLILLVLLLLSVVF. At 97 to 183 the chain is on the cytoplasmic side; the sequence is LATYYKRKRT…SNHNPSDSES (87 aa). A disordered region spans residues 163 to 183; it reads ECLPTLKEEKESNHNPSDSES. S179 carries the phosphoserine modification.

The protein localises to the membrane. In Homo sapiens (Human), this protein is Transmembrane protein 154 (TMEM154).